Reading from the N-terminus, the 627-residue chain is Asparagine synthetase domain-containing protein 1 (627 aa).

The active-site For GATase activity is the Cys2. In terms of domain architecture, Glutamine amidotransferase type-2 spans Cys2–Asn184. The Asparagine synthetase domain occupies Ala308 to Lys597. The disordered stretch occupies residues Gln373–Thr404.

In Mus musculus (Mouse), this protein is Asparagine synthetase domain-containing protein 1 (Asnsd1).